The sequence spans 467 residues: Argininosuccinate lyase (467 aa).

It belongs to the lyase 1 family. Argininosuccinate lyase subfamily.

It localises to the cytoplasm. The catalysed reaction is 2-(N(omega)-L-arginino)succinate = fumarate + L-arginine. It participates in amino-acid biosynthesis; L-arginine biosynthesis; L-arginine from L-ornithine and carbamoyl phosphate: step 3/3. The protein is Argininosuccinate lyase of Nitrosococcus oceani (strain ATCC 19707 / BCRC 17464 / JCM 30415 / NCIMB 11848 / C-107).